Here is a 439-residue protein sequence, read N- to C-terminus: Acyl-lipid (8-3)-desaturase (439 aa).

Residues 7-88 (GRSAAREMTA…LPKLDASKVE (82 aa)) enclose the Cytochrome b5 heme-binding domain. Residues histidine 40 and histidine 66 each contribute to the heme site. A helical membrane pass occupies residues 123 to 143 (IPHMIYRVVEIVALFALSFWL). Residues 171-175 (HEMGH) carry the Histidine box-1 motif. A Histidine box-2 motif is present at residues 208 to 213 (HSKHHA). Transmembrane regions (helical) follow at residues 254-274 (AYLFAPVSCLLIGLGWTLYLH), 287-307 (FVWIFARYIGWFSLMGALGYS), and 312-332 (VGMYLCSFGLGCIYIFLQFAV). The short motif at 376–380 (QIEHH) is the Histidine box-3 element.

It belongs to the fatty acid desaturase type 1 family. Fe(2+) is required as a cofactor.

The protein localises to the membrane. It catalyses the reaction an (8Z,11Z,14Z)-icosatrienoyl-containing glycerolipid + 2 Fe(II)-[cytochrome b5] + O2 + 2 H(+) = (5Z,8Z,11Z,14Z)-eicosatetraenoyl-containing glycerolipid + 2 Fe(III)-[cytochrome b5] + 2 H2O. It carries out the reaction an (8Z,11Z,14Z,17Z)-eicosatetraenoyl-containing glycerolipid + 2 Fe(II)-[cytochrome b5] + O2 + 2 H(+) = a (5Z,8Z,11Z,14Z,17Z)-eicosapentaenoyl-containing glycerolipid + 2 Fe(III)-[cytochrome b5] + 2 H2O. Functionally, fatty acid desaturase that introduces a cis double bond at the 5-position in 20-carbon polyunsaturated fatty acids incorporated in a glycerolipid that contain a Delta(8) double bond. The chain is Acyl-lipid (8-3)-desaturase from Thraustochytrium sp.